A 1331-amino-acid polypeptide reads, in one-letter code: Disease resistance protein RUN1 (1331 aa).

The tract at residues 1–20 (MASTSSSRASSSSSSSSTPS) is disordered. Residues 25–190 (ITYDVFLSFR…EITDSIFRRL (166 aa)) enclose the TIR domain. NAD(+)-binding positions include 34–39 (RGEDTR) and Gly66. Glu100 is an active-site residue. The region spanning 206 to 434 (SHVKEMIWRL…REPEAEILSV (229 aa)) is the NB-ARC domain. LRR repeat units lie at residues 429–452 (AEILSVLKRSYDGLGRTEKSIFLD), 480–509 (IKNLNDKCLITLQYNRIRMHDLIQQMGWEI), 540–565 (IKRVETISLDLSKLKRVCSNSNAFAK), 616–638 (SYELRYLRWDGYPLDFLPSNFDG), 648–673 (CSNIKQLRLGNKDLEMLKVIDLSYSR), 684–708 (MPNLERLFLRGCVSLIDIHPSVGNM), 709–732 (KKLTTLSLKSCKKLKNLPDSIGDL), 734–756 (SLEILDLAYCSKFEKFPEKGGNM), 757–779 (KSLTELDLQNTAIKDLPDSIGDL), 781–803 (SLKYLDLSDCSKFEKFPEKGGNM), 804–826 (KSLRELDLRNTAIKDLPDSIRDL), 828–850 (SLERLYLSYCSKFEKFPEKGGNM), 851–873 (KSLMELDLQNTAIKDLPDSIGDL), 875–897 (SLKYLDLSNCSKFEKFPEKGGNM), 898–920 (KSLTELFLENTAIKDLPDSIGDL), 922–944 (SLVSLNLSDCSKFEKFPEKGGNM), 945–967 (KSLNWLYLNNTAIKDLPDSIGDL), 969–991 (SLMRLYLSNSSKFEKLPEKVGNM), 992–1014 (KSLELLDLRNTAIKDLPDSIGDL), and 1017–1040 (LEKLSLSNCPKFEVLPLSLKAIDA). A Nuclear localization signal motif is present at residues 1287-1291 (RKRRR).

This sequence belongs to the disease resistance TIR-NB-LRR family.

It localises to the nucleus. It is found in the cytoplasm. It carries out the reaction NAD(+) + H2O = ADP-D-ribose + nicotinamide + H(+). The catalysed reaction is NADP(+) + H2O = ADP-D-ribose 2'-phosphate + nicotinamide + H(+). In terms of biological role, disease resistance (R) protein that confers resistance to multiple powdery and downy mildew by promoting cell death. Acts as a NAD(+) hydrolase (NADase): in response to activation, catalyzes cleavage of NAD(+) into ADP-D-ribose (ADPR) and nicotinamide; NAD(+) cleavage triggering a defense system that promotes cell death. Also able to hydrolyze NADP(+), but not other NAD(+)-related molecules. This chain is Disease resistance protein RUN1, found in Vitis rotundifolia (Muscadine grape).